The following is a 209-amino-acid chain: Bacteriorhodopsin (209 aa).

Residues Leu1 to Ala17 traverse the membrane as a helical segment. Topologically, residues Arg18–Tyr31 are cytoplasmic. The helical transmembrane segment at Ile32–Leu50 threads the bilayer. Residues Gly51 to Ile66 lie on the Extracellular side of the membrane. A helical membrane pass occupies residues Tyr67–Asp84. Residues Leu85–Thr95 are Cytoplasmic-facing. A helical membrane pass occupies residues Ile96–Leu115. Topologically, residues Ser116 to Arg128 are extracellular. The helical transmembrane segment at Leu129–Ser148 threads the bilayer. The Cytoplasmic segment spans residues Ser149 to Lys166. Residues Thr167 to Val185 form a helical membrane-spanning segment. Topologically, residues Gly186–Ile197 are extracellular. The chain crosses the membrane as a helical span at residues Glu198–Ala209.

Belongs to the archaeal/bacterial/fungal opsin family.

It localises to the cell membrane. In terms of biological role, light-driven proton pump. The chain is Bacteriorhodopsin (bop) from Halobacterium halobium (strain shark).